A 245-amino-acid polypeptide reads, in one-letter code: Uridylate kinase (245 aa).

Position 14–17 (14–17 (KLSG)) interacts with ATP. Position 56 (glycine 56) interacts with UMP. 2 residues coordinate ATP: glycine 57 and arginine 61. Residues aspartate 76 and 137 to 144 (TGLPFFTT) contribute to the UMP site. Residues threonine 164, tyrosine 170, and aspartate 173 each coordinate ATP.

The protein belongs to the UMP kinase family. Homohexamer.

It is found in the cytoplasm. It catalyses the reaction UMP + ATP = UDP + ADP. The protein operates within pyrimidine metabolism; CTP biosynthesis via de novo pathway; UDP from UMP (UMPK route): step 1/1. With respect to regulation, inhibited by UTP. In terms of biological role, catalyzes the reversible phosphorylation of UMP to UDP. This chain is Uridylate kinase, found in Syntrophobacter fumaroxidans (strain DSM 10017 / MPOB).